Here is a 91-residue protein sequence, read N- to C-terminus: Movement protein TGBp3 (91 aa).

At 1 to 23 the chain is on the lumenal side; it reads MLGTRNIPTTSGLPLPPPSSSLS. The chain crosses the membrane as a helical span at residues 24 to 46; the sequence is AYIFPTILAIIFAVFALVAIHIT. The Cytoplasmic portion of the chain corresponds to 47 to 91; that stretch reads TPEPFCTIHIDGASITITNCPDPAAILNKVAIGPWRGLSYHNNLK.

It belongs to the Tymovirales TGBp3 protein family.

The protein resides in the host endoplasmic reticulum membrane. Plays a role in viral cell-to-cell propagation, by facilitating genome transport to neighboring plant cells through plasmosdesmata. May induce the formation of granular vesicles derived from the Endoplasmic reticulum, which align on actin filaments. This is Movement protein TGBp3 from Cymbidium mosaic virus (strain Singapore).